Consider the following 378-residue polypeptide: Glutamate 5-kinase (378 aa).

Residue Lys-17 coordinates ATP. Substrate-binding residues include Ser-58, Asp-145, and Asn-157. ATP-binding positions include 177–178 (TD) and 221–227 (TGGMMTK). The PUA domain maps to 286-364 (VGKLYLDSGA…KEIPTILGYV (79 aa)).

It belongs to the glutamate 5-kinase family.

It localises to the cytoplasm. It catalyses the reaction L-glutamate + ATP = L-glutamyl 5-phosphate + ADP. The protein operates within amino-acid biosynthesis; L-proline biosynthesis; L-glutamate 5-semialdehyde from L-glutamate: step 1/2. Catalyzes the transfer of a phosphate group to glutamate to form L-glutamate 5-phosphate. This Nostoc sp. (strain PCC 7120 / SAG 25.82 / UTEX 2576) protein is Glutamate 5-kinase.